A 414-amino-acid polypeptide reads, in one-letter code: Relaxin-3 receptor 2 (414 aa).

Residues 1 to 43 are Extracellular-facing; the sequence is MATSNSSASLPTLFWVNGSGDSVLSTDGAAMPVQFLVLRIMVA. 2 N-linked (GlcNAc...) asparagine glycosylation sites follow: Asn5 and Asn17. Residues 44-64 traverse the membrane as a helical segment; the sequence is LAYGLVGIIGLLGNLAVLWVL. The Cytoplasmic segment spans residues 65–77; that stretch reads GNCGQRVPGLSSD. Residues 78–98 traverse the membrane as a helical segment; sequence TFVFSLALADLGLALTLPFWA. Residues 99–116 are Extracellular-facing; sequence TESAMDFHWPFGSALCKV. The cysteines at positions 114 and 191 are disulfide-linked. The chain crosses the membrane as a helical span at residues 117 to 137; sequence VLTTTVLSIYASTFLITALSI. Topologically, residues 138–155 are cytoplasmic; the sequence is ARYWVVAMAVGPGSHLSV. The chain crosses the membrane as a helical span at residues 156–176; it reads FWARVVTLAVWVAAALVTVPT. The Extracellular segment spans residues 177–209; that stretch reads AIFGAEVELWGVCLCLLRFPSRYWLGAYQLQRV. A helical transmembrane segment spans residues 210–230; that stretch reads VLAFIVPLGVITTSYLLLLAF. Over 231–255 the chain is Cytoplasmic; it reads LERQQRCRPRQWQDSRVVARSVRVL. A helical membrane pass occupies residues 256–276; sequence VASFALCWVPNHVVTLWEILV. Residues 277–293 lie on the Extracellular side of the membrane; it reads RFDLVPWDSTFYTFHTY. The chain crosses the membrane as a helical span at residues 294 to 316; sequence ILPITTCLAHSNSCLNPVIYCLL. The Cytoplasmic portion of the chain corresponds to 317-414; that stretch reads RREPQQVLVS…SQAAVSPGEV (98 aa).

Belongs to the G-protein coupled receptor 1 family. Detected only in bone marrow.

It is found in the cell membrane. Its function is as follows. High affinity receptor for INSL5. Also acts as a receptor for RLN3/relaxin-3, as well as bradykinin and kallidin. Binding of the ligand inhibit cAMP accumulation. This is Relaxin-3 receptor 2 (Rxfp4) from Mus musculus (Mouse).